The following is a 158-amino-acid chain: Large ribosomal subunit protein uL15 (158 aa).

The span at 1–13 (MKLNEIKDNEGST) shows a compositional bias: basic and acidic residues. Residues 1–45 (MKLNEIKDNEGSTHSRKRLGRGIGSGSGKTGGRGVKGQKSRSGVA) form a disordered region. Residues 21 to 35 (RGIGSGSGKTGGRGV) are compositionally biased toward gly residues.

Belongs to the universal ribosomal protein uL15 family. As to quaternary structure, part of the 50S ribosomal subunit.

Its function is as follows. Binds to the 23S rRNA. The chain is Large ribosomal subunit protein uL15 from Rhizobium etli (strain CIAT 652).